The primary structure comprises 218 residues: Ras-related protein Rab-11B (218 aa).

An N-acetylglycine modification is found at glycine 2. The residue at position 4 (arginine 4) is a Citrulline. 11 residues coordinate GTP: serine 20, glycine 21, glycine 23, lysine 24, serine 25, asparagine 26, asparagine 37, leucine 38, serine 40, serine 42, and threonine 43. Serine 25 serves as a coordination point for Mg(2+). The Switch 1 motif lies at 36-47 (FNLESKSTIGVE). Residues threonine 43 and aspartate 66 each coordinate Mg(2+). The Switch 2 motif lies at 67 to 86 (TAGQERYRAITSAYYRGAVG). GTP is bound by residues glycine 69, asparagine 124, lysine 125, aspartate 127, alanine 155, and leucine 156. The tract at residues 184 to 218 (RAAHDESPGNNVVDISVPPTTDGQKPNKLQCCQNL) is disordered. S-geranylgeranyl cysteine attachment occurs at residues cysteine 214 and cysteine 215. Cysteine 215 bears the Cysteine methyl ester mark. A propeptide spans 216–218 (QNL) (removed in mature form).

This sequence belongs to the small GTPase superfamily. Rab family. As to quaternary structure, interacts with KCNMA1. Interacts with RAB11FIP1, RAB11FIP2, RAB11FIP3 and RAB11FIP4. May interact with TBC1D14. Interacts with ATP6V1E1. Interacts with PI4KB. Interacts (GDP-bound form) with ZFYVE27. Interacts (GDP-bound form) with KIF5A in a ZFYVE27-dependent manner. Interacts with RELCH. Interacts (in GTP-bound form) with TBC1D8B (via domain Rab-GAP TBC). Forms a complex containing RAB11B, ASAP1, Rabin8/RAB3IP, RAP11FIP3 and ARF4. Interacts with WDR44. Mg(2+) serves as cofactor. In terms of processing, citrullinated by PADI4. (Microbial infection) Glycosylated on arginine residues by S.typhimurium protein Ssek3.

Its subcellular location is the recycling endosome membrane. It is found in the cytoplasmic vesicle. It localises to the secretory vesicle. The protein resides in the synaptic vesicle membrane. The protein localises to the phagosome membrane. The catalysed reaction is GTP + H2O = GDP + phosphate + H(+). Its activity is regulated as follows. Regulated by guanine nucleotide exchange factors (GEFs) which promote the exchange of bound GDP for free GTP. Regulated by GTPase activating proteins (GAPs) which increase the GTP hydrolysis activity. Inhibited by GDP dissociation inhibitors (GDIs) which prevent Rab-GDP dissociation. Functionally, the small GTPases Rab are key regulators of intracellular membrane trafficking, from the formation of transport vesicles to their fusion with membranes. Rabs cycle between an inactive GDP-bound form and an active GTP-bound form that is able to recruit to membranes different set of downstream effectors directly responsible for vesicle formation, movement, tethering and fusion. The small Rab GTPase RAB11B plays a role in endocytic recycling, regulating apical recycling of several transmembrane proteins including cystic fibrosis transmembrane conductance regulator/CFTR, epithelial sodium channel/ENaC, potassium voltage-gated channel, and voltage-dependent L-type calcium channel. May also regulate constitutive and regulated secretion, like insulin granule exocytosis. Required for melanosome transport and release from melanocytes. Also regulates V-ATPase intracellular transport in response to extracellular acidosis. Promotes Rabin8/RAB3IP preciliary vesicular trafficking to mother centriole by forming a ciliary targeting complex containing Rab11, ASAP1, Rabin8/RAB3IP, RAB11FIP3 and ARF4, thereby regulating ciliogenesis initiation. On the contrary, upon LPAR1 receptor signaling pathway activation, interaction with phosphorylated WDR44 prevents Rab11-RAB3IP-RAB11FIP3 complex formation and cilia growth. The polypeptide is Ras-related protein Rab-11B (Homo sapiens (Human)).